The chain runs to 440 residues: Tetratricopeptide repeat protein 5 (440 aa).

5 TPR repeats span residues 7 to 61 (EEVK…EEVV), 68 to 98 (AQVL…AVKL), 103 to 130 (VEAW…SGAL), 136 to 174 (KVSL…AVQM), and 179 to 216 (GRSW…AEKV). The Nuclear export signal motif lies at 13 to 24 (LQKLQELVDQLY). Ser-203 carries the post-translational modification Phosphoserine; by ATM. Ser-221 is modified (phosphoserine; by CHEK2). Residues 224–253 (PDLHLNRATLHKYEESYGEALEGFSRAAAL) form a TPR 6 repeat. Residues 285-287 (KTK) form a mediates interaction with 28S rRNA of ribosome-coding tubulin region.

Interacts with JMY and p300/EP300; the interaction occurs in the nucleus and augments the association between JMY and p300/EP300 in response to DNA damage. Forms a complex with HSF1 and p300/EP300; these interactions augment chromatin-bound HSF1 and p300/EP300 histone acetyltransferase activity, resulting in enhanced heat-shock-responsive transcription. Interacts with PRMT5; the interaction is DNA damage-dependent and promotes PRMT5 interaction with p53/TP53 and subsequent methylation. Interacts with JMY; the interaction occurs in the cytoplasm and results in the inhibition of JYM's nucleation activity. Interacts with ribosome-coding tubulin (via 60S subunit 28S rRNA and protein uL24/RPL26) and the N-terminal of nascent tubulin polypeptide (via alpha-tubulin MREC motif and beta-tubulin MREI motif); these interactions result in tubulin mRNA-targeted degradation. Interacts with ATP5F1B; the interaction occurs in the mitochondria and results in ATP production decrease. Interacts with p53/TP53; the interaction occurs in the mitochondria and results in increased apoptosis. Post-translationally, phosphorylation by ATM kinase induces nuclear accumulation while interfering with nuclear export, and phosphorylation by CHEK2 kinase enhances nuclear stability.

It localises to the nucleus. The protein localises to the cytoplasm. Its subcellular location is the cytoplasmic vesicle. The protein resides in the mitochondrion matrix. Cofactor involved in the regulation of various cellular mechanisms such as actin regulation, autophagy, chromatin regulation and DNA repair. In non-stress conditions, interacts with cofactor JMY in the cytoplasm which prevents JMY's actin nucleation activity and ability to activate the Arp2/3 complex. Acts as a negative regulator of nutrient stress-induced autophagy by preventing JMY's interaction with MAP1LC3B, thereby preventing autophagosome formation. Involves in tubulin autoregulation by promoting its degradation in response to excess soluble tubulin. To do so, associates with the active ribosome near the ribosome exit tunnel and with nascent tubulin polypeptides early during their translation, triggering tubulin mRNA-targeted degradation. Following DNA damage, phosphorylated by DNA damage responsive protein kinases ATM and CHEK2, leading to its nuclear accumulation and stability. Nuclear TTC5/STRAP promotes the assembly of a stress-responsive p53/TP53 coactivator complex, which includes the coactivators JMY and p300, thereby increasing p53/TP53-dependent transcription and apoptosis. Also recruits arginine methyltransferase PRMT5 to p53/TP53 when DNA is damaged, allowing PRMT5 to methylate p53/TP53. In DNA stress conditions, also prevents p53/TP53 degradation by E3 ubiquitin ligase MDM2. Upon heat-shock stress, forms a chromatin-associated complex with heat-shock factor 1 HSF1 and p300/EP300 to stimulate heat-shock-responsive transcription, thereby increasing cell survival. Mitochondrial TTC5/STRAP interacts with ATP synthase subunit beta ATP5F1B which decreased ATP synthase activity and lowers mitochondrial ATP production, thereby regulating cellular respiration and mitochondrial-dependent apoptosis. Mitochondrial TTC5/STRAP also regulates p53/TP53-mediated apoptosis. In Homo sapiens (Human), this protein is Tetratricopeptide repeat protein 5.